A 57-amino-acid polypeptide reads, in one-letter code: Large ribosomal subunit protein bL32 (57 aa).

The protein belongs to the bacterial ribosomal protein bL32 family.

This chain is Large ribosomal subunit protein bL32, found in Streptomyces griseus subsp. griseus (strain JCM 4626 / CBS 651.72 / NBRC 13350 / KCC S-0626 / ISP 5235).